The chain runs to 222 residues: Thiopurine S-methyltransferase (222 aa).

S-adenosyl-L-methionine-binding residues include Trp10, Leu45, Glu66, and Arg124.

This sequence belongs to the class I-like SAM-binding methyltransferase superfamily. TPMT family.

The protein resides in the cytoplasm. The catalysed reaction is S-adenosyl-L-methionine + a thiopurine = S-adenosyl-L-homocysteine + a thiopurine S-methylether.. The sequence is that of Thiopurine S-methyltransferase from Methylococcus capsulatus (strain ATCC 33009 / NCIMB 11132 / Bath).